The primary structure comprises 509 residues: Lysine--tRNA ligase (509 aa).

Residues Glu395 and Glu402 each contribute to the Mg(2+) site.

The protein belongs to the class-II aminoacyl-tRNA synthetase family. In terms of assembly, homodimer. It depends on Mg(2+) as a cofactor.

The protein resides in the cytoplasm. The enzyme catalyses tRNA(Lys) + L-lysine + ATP = L-lysyl-tRNA(Lys) + AMP + diphosphate. This Fervidobacterium nodosum (strain ATCC 35602 / DSM 5306 / Rt17-B1) protein is Lysine--tRNA ligase.